A 209-amino-acid polypeptide reads, in one-letter code: High frequency lysogenization protein HflD homolog (209 aa).

A coiled-coil region spans residues Gln-79 to Asp-121.

The protein belongs to the HflD family.

It localises to the cytoplasm. The protein localises to the cell inner membrane. This chain is High frequency lysogenization protein HflD homolog, found in Enterobacter sp. (strain 638).